The following is a 336-amino-acid chain: Potassium channel subfamily K member 1 (336 aa).

Residues 1–20 (MLQSLAGSSCVRLVERHRSA) are Cytoplasmic-facing. A helical membrane pass occupies residues 21-41 (WCFGFLVLGYLLYLVFGAVVF). The Extracellular portion of the chain corresponds to 42–103 (SSVELPYEDL…SNASGNWNWD (62 aa)). A glycan (N-linked (GlcNAc...) asparagine) is linked at Asn95. An intramembrane region (helical) is located at residues 104–116 (FASALFFASTVLS). Residues 117-122 (TTGYGH) lie within the membrane without spanning it. Residues 117–122 (TTGYGH) form a selectivity filter 1 region. Topologically, residues 123–132 (TVPLSDGGKA) are extracellular. Residues 133-156 (FCIIYSVIGIPFTLLFLTAVVQRV) form a helical membrane-spanning segment. At 157–181 (TVHVTRRPVLYFHVRWGFSKQVVAI) the chain is on the cytoplasmic side. The helical transmembrane segment at 182 to 202 (VHAVLLGLITVSCFFFIPAAV) threads the bilayer. Topologically, residues 203–211 (FSVLEDDWN) are extracellular. Positions 212 to 224 (FLESFYFCFISLS) form an intramembrane region, helical. The interval 225–230 (TIGLGD) is selectivity filter 2. Residues 225 to 231 (TIGLGDY) lie within the membrane without spanning it. Residues 232 to 243 (VPGEGYNQKFRE) are Extracellular-facing. The helical transmembrane segment at 244–267 (LYKIGITCYLLLGLIAMLVVLETF) threads the bilayer. Residues 268 to 336 (CELHELKKFR…SACADGPANH (69 aa)) are Cytoplasmic-facing. Lys274 is covalently cross-linked (Glycyl lysine isopeptide (Lys-Gly) (interchain with G-Cter in SUMO)). An important for intracellular retention in recycling endosomes region spans residues 293-299 (IIEHDQL). The interval 315–336 (QKQNEPFVATPSSACADGPANH) is disordered. The residue at position 326 (Ser326) is a Phosphoserine.

It belongs to the two pore domain potassium channel (TC 1.A.1.8) family. Homodimer; disulfide-linked. Heterodimer with KCNK2; disulfide-linked. In astrocytes, forms mostly heterodimeric potassium channels with KCNK2, with only a minor proportion of functional channels containing homodimeric KCNK1. Interacts with KCNK3 and KCNK9, forming functional heterodimeric channels. Interacts with GNG4. Identified in a complex with PSD and ARF6; interacts only with PSD that is bound to ARF6. Interacts with UBE2I. Sumoylation is controversial. Sumoylated by UBE2I. Not sumoylated when expressed in xenopus oocytes or mammalian cells. Sumoylation inactivates the channel, but does not interfere with expression at the cell membrane. Sumoylation of a single subunit is sufficient to silence the dimeric channel. Sumoylation of KCNK1 is sufficient to silence heterodimeric channels formed by KCNK1 and KCNK3 or KCNK9. Desumoylated by SENP1; this activates the channel. Desumoylated by SENP1; this strongly increases halothane-mediated activation of heterodimeric channels formed with KCNK9. SENP1 treatment has no effect. In terms of tissue distribution, expressed in renal distal tubules, especially in cortical collecting duct and cortical thick ascending limb, with lower levels in the connecting tubule.

It localises to the cell membrane. The protein resides in the recycling endosome. Its subcellular location is the synaptic cell membrane. The protein localises to the cytoplasmic vesicle. It is found in the perikaryon. It localises to the cell projection. The protein resides in the dendrite. Its subcellular location is the apical cell membrane. The enzyme catalyses K(+)(in) = K(+)(out). It carries out the reaction NH4(+)(in) = NH4(+)(out). The catalysed reaction is Na(+)(in) = Na(+)(out). It catalyses the reaction Rb(+)(in) = Rb(+)(out). The enzyme catalyses Cs(+)(in) = Cs(+)(out). It carries out the reaction Li(+)(in) = Li(+)(out). The catalysed reaction is L-glutamate(out) = L-glutamate(in). It catalyses the reaction chloride(in) = chloride(out). Ion channel that contributes to passive transmembrane potassium transport and to the regulation of the resting membrane potential in brain astrocytes, but also in kidney and in other tissues. Forms dimeric channels through which potassium ions pass in accordance with their electrochemical gradient. The channel is selective for K(+) ions at physiological potassium concentrations and at neutral pH, but becomes permeable to Na(+) at subphysiological K(+) levels and upon acidification of the extracellular medium. The homodimer has very low potassium channel activity, when expressed in heterologous systems, and can function as weakly inward rectifying potassium channel. Channel activity is modulated by activation of serotonin receptors. Heterodimeric channels containing KCNK1 and KCNK2 have much higher activity, and may represent the predominant form in astrocytes. Heterodimeric channels containing KCNK1 and KCNK3 or KCNK9 have much higher activity. Heterodimeric channels formed by KCNK1 and KCNK9 may contribute to halothane-sensitive currents. Mediates outward rectifying potassium currents in dentate gyrus granule cells and contributes to the regulation of their resting membrane potential. Contributes to the regulation of action potential firing in dentate gyrus granule cells and down-regulates their intrinsic excitability. In astrocytes, the heterodimer formed by KCNK1 and KCNK2 is required for rapid glutamate release in response to activation of G-protein coupled receptors, such as F2R and CNR1. Required for normal ion and water transport in the kidney. Contributes to the regulation of the resting membrane potential of pancreatic beta cells. The low channel activity of homodimeric KCNK1 may be due to sumoylation. The low channel activity may be due to rapid internalization from the cell membrane and retention in recycling endosomes. Permeable to monovalent cations with ion selectivity for K(+) &gt; Rb(+) &gt;&gt; NH4(+) &gt;&gt; Cs(+) = Na(+) = Li(+). The sequence is that of Potassium channel subfamily K member 1 from Oryctolagus cuniculus (Rabbit).